The primary structure comprises 301 residues: ADP,ATP carrier protein 1 (301 aa).

3 Solcar repeats span residues 8–100 (YGFA…YKQV), 113–203 (RYFL…AKGM), and 210–299 (TSIF…VKAL). 5 helical membrane passes run 10 to 39 (FAKD…LLLQ), 77 to 101 (LANV…KQVF), 112 to 132 (WRYF…SLCF), 181 to 201 (VSVQ…DTAK), and 213 to 233 (FVSW…SYPF). ADP is bound by residues arginine 82 and lysine 94. ADP is bound at residue arginine 237. Residues 237-242 (RRRMMM) form an important for transport activity region. A Nucleotide carrier signature motif motif is present at residues 237-242 (RRRMMM). The helical transmembrane segment at 276–293 (AFSNVLRGTGGALVLVFY) threads the bilayer.

This sequence belongs to the mitochondrial carrier (TC 2.A.29) family. As to quaternary structure, monomer.

The protein localises to the mitochondrion inner membrane. It catalyses the reaction ADP(in) + ATP(out) = ADP(out) + ATP(in). Its activity is regulated as follows. The matrix-open state (m-state) is inhibited by the membrane-permeable bongkrekic acid (BKA). The cytoplasmic-open state (c-state) is inhibited by the membrane-impermeable toxic inhibitor carboxyatractyloside (CATR). Functionally, ADP:ATP antiporter that mediates import of ADP into the mitochondrial matrix for ATP synthesis, and export of ATP out to fuel the cell. Cycles between the cytoplasmic-open state (c-state) and the matrix-open state (m-state): operates by the alternating access mechanism with a single substrate-binding site intermittently exposed to either the cytosolic (c-state) or matrix (m-state) side of the inner mitochondrial membrane. The polypeptide is ADP,ATP carrier protein 1 (Anopheles gambiae (African malaria mosquito)).